Here is a 362-residue protein sequence, read N- to C-terminus: Very-long-chain (3R)-3-hydroxyacyl-CoA dehydratase (362 aa).

At 1-149 (MADCSLRPHV…DPFKHLKKGY (149 aa)) the chain is on the cytoplasmic side. The CS domain occupies 5-94 (SLRPHVHWAQ…KESSWWERLT (90 aa)). The stretch at 111-135 (LDESDAEMELKEKEEEKINKMKIES) forms a coiled coil. A helical transmembrane segment spans residues 150–170 (LIMYNLVQFLGFSWIFVNMTV). The Lumenal portion of the chain corresponds to 171 to 189 (RLFILGKDSFYDTFHTIAD). The chain crosses the membrane as a helical span at residues 190 to 210 (MMYFCQTLALMEILNSLIGLV). At 211-212 (RS) the chain is on the cytoplasmic side. The chain crosses the membrane as a helical span at residues 213–233 (PLIPAVIQVFGRNFILFVVLG). Topologically, residues 234-242 (SLEEMQSKA) are lumenal. A helical transmembrane segment spans residues 243–263 (VVFFLFYFWSIIELFRYPYYM). Topologically, residues 264–282 (LSCMGIEWKPLTWLRYTSW) are cytoplasmic. The chain crosses the membrane as a helical span at residues 283–303 (IPLYPLGGLAEAVCLIQSIPI). Catalysis depends on residues Tyr-286 and Glu-293. Residues 304-319 (FSETGKFSLGLPNPLN) are Lumenal-facing. The helical transmembrane segment at 320–340 (VTIQFSFLLQMYLIALFLGLF) threads the bilayer. Topologically, residues 341–362 (VNFRYLYKQRKQHLGPKKRKMK) are cytoplasmic.

Belongs to the very long-chain fatty acids dehydratase HACD family.

The protein localises to the endoplasmic reticulum membrane. It catalyses the reaction a very-long-chain (3R)-3-hydroxyacyl-CoA = a very-long-chain (2E)-enoyl-CoA + H2O. The enzyme catalyses (3R)-hydroxyhexadecanoyl-CoA = (2E)-hexadecenoyl-CoA + H2O. It functions in the pathway lipid metabolism; fatty acid biosynthesis. In terms of biological role, catalyzes the third of the four reactions of the long-chain fatty acids elongation cycle. This endoplasmic reticulum-bound enzymatic process, allows the addition of two carbons to the chain of long- and very long-chain fatty acids/VLCFAs per cycle. This enzyme catalyzes the dehydration of the 3-hydroxyacyl-CoA intermediate into trans-2,3-enoyl-CoA, within each cycle of fatty acid elongation. Thereby, it participates in the production of VLCFAs of different chain lengths that are involved in multiple biological processes as precursors of membrane lipids and lipid mediators. Involved in Rac1-signaling pathways leading to the modulation of gene expression. This Gallus gallus (Chicken) protein is Very-long-chain (3R)-3-hydroxyacyl-CoA dehydratase.